Here is a 562-residue protein sequence, read N- to C-terminus: Protein FAM83D-A (562 aa).

Residues 424 to 471 are disordered; the sequence is ITTQTTETSQCTTQTPAPTSSVARLSNSSNSSSSSFSSTSITSTGSNC. Residues 425–471 show a composition bias toward low complexity; that stretch reads TTQTTETSQCTTQTPAPTSSVARLSNSSNSSSSSFSSTSITSTGSNC.

The protein belongs to the FAM83 family.

Its subcellular location is the cytoplasm. The protein resides in the cytoskeleton. It is found in the spindle. It localises to the spindle pole. Functionally, may regulate cell proliferation, growth, migration and epithelial to mesenchymal transition. May also be important for proper chromosome congression and alignment during mitosis. The chain is Protein FAM83D-A from Xenopus laevis (African clawed frog).